The chain runs to 688 residues: Polyphosphate kinase (688 aa).

Asn-45 contacts ATP. Mg(2+) is bound by residues Arg-375 and Arg-405. The PLD phosphodiesterase domain maps to 430 to 464 (PGLKIHAKLFLISRKEGDDVVRYAHIGTGNFNEKT). The Phosphohistidine intermediate role is filled by His-435. ATP-binding residues include Tyr-468, Arg-564, and His-592.

The protein belongs to the polyphosphate kinase 1 (PPK1) family. The cofactor is Mg(2+). In terms of processing, an intermediate of this reaction is the autophosphorylated ppk in which a phosphate is covalently linked to a histidine residue through a N-P bond.

The enzyme catalyses [phosphate](n) + ATP = [phosphate](n+1) + ADP. Functionally, catalyzes the reversible transfer of the terminal phosphate of ATP to form a long-chain polyphosphate (polyP). The protein is Polyphosphate kinase of Salmonella typhimurium (strain LT2 / SGSC1412 / ATCC 700720).